The primary structure comprises 350 residues: Glycerol-1-phosphate dehydrogenase [NAD(P)+] (350 aa).

Residues 96-100 and 118-121 contribute to the NAD(+) site; these read GNIID and TAPS. Aspartate 123 contributes to the substrate binding site. Serine 127 contributes to the NAD(+) binding site. Substrate is bound at residue aspartate 170. The Zn(2+) site is built by aspartate 170 and histidine 250. Histidine 254 provides a ligand contact to substrate. Histidine 266 contacts Zn(2+).

The protein belongs to the glycerol-1-phosphate dehydrogenase family. Homodimer. The cofactor is Zn(2+).

It localises to the cytoplasm. It carries out the reaction sn-glycerol 1-phosphate + NAD(+) = dihydroxyacetone phosphate + NADH + H(+). The catalysed reaction is sn-glycerol 1-phosphate + NADP(+) = dihydroxyacetone phosphate + NADPH + H(+). Its pathway is membrane lipid metabolism; glycerophospholipid metabolism. In terms of biological role, catalyzes the NAD(P)H-dependent reduction of dihydroxyacetonephosphate (DHAP or glycerone phosphate) to glycerol 1-phosphate (G1P). The G1P thus generated is used as the glycerophosphate backbone of phospholipids in the cellular membranes of Archaea. The sequence is that of Glycerol-1-phosphate dehydrogenase [NAD(P)+] from Sulfurisphaera tokodaii (strain DSM 16993 / JCM 10545 / NBRC 100140 / 7) (Sulfolobus tokodaii).